A 245-amino-acid polypeptide reads, in one-letter code: 1-(5-phosphoribosyl)-5-[(5-phosphoribosylamino)methylideneamino] imidazole-4-carboxamide isomerase (245 aa).

Aspartate 7 acts as the Proton acceptor in catalysis. The active-site Proton donor is aspartate 129.

It belongs to the HisA/HisF family.

It localises to the cytoplasm. The enzyme catalyses 1-(5-phospho-beta-D-ribosyl)-5-[(5-phospho-beta-D-ribosylamino)methylideneamino]imidazole-4-carboxamide = 5-[(5-phospho-1-deoxy-D-ribulos-1-ylimino)methylamino]-1-(5-phospho-beta-D-ribosyl)imidazole-4-carboxamide. It participates in amino-acid biosynthesis; L-histidine biosynthesis; L-histidine from 5-phospho-alpha-D-ribose 1-diphosphate: step 4/9. This chain is 1-(5-phosphoribosyl)-5-[(5-phosphoribosylamino)methylideneamino] imidazole-4-carboxamide isomerase, found in Edwardsiella ictaluri (strain 93-146).